The sequence spans 315 residues: Methionyl-tRNA formyltransferase (315 aa).

114 to 117 (SLLP) serves as a coordination point for (6S)-5,6,7,8-tetrahydrofolate.

This sequence belongs to the Fmt family.

The enzyme catalyses L-methionyl-tRNA(fMet) + (6R)-10-formyltetrahydrofolate = N-formyl-L-methionyl-tRNA(fMet) + (6S)-5,6,7,8-tetrahydrofolate + H(+). In terms of biological role, attaches a formyl group to the free amino group of methionyl-tRNA(fMet). The formyl group appears to play a dual role in the initiator identity of N-formylmethionyl-tRNA by promoting its recognition by IF2 and preventing the misappropriation of this tRNA by the elongation apparatus. In Corynebacterium efficiens (strain DSM 44549 / YS-314 / AJ 12310 / JCM 11189 / NBRC 100395), this protein is Methionyl-tRNA formyltransferase.